Here is a 114-residue protein sequence, read N- to C-terminus: MSVLSLVVLSLLMALPPASCQQGRGNLQPWMQGLIAVAVFLVLVAIAFAVNHFWCQEKPAPINMVMTIGNKADGILVGTDGKYSSMAASFRSSEHENAYENIPEEEGKVCSTPM.

Residues 1–28 are Extracellular-facing; sequence MSVLSLVVLSLLMALPPASCQQGRGNLQ. Residues 29 to 51 form a helical membrane-spanning segment; the sequence is PWMQGLIAVAVFLVLVAIAFAVN. Residues 52–114 are Cytoplasmic-facing; that stretch reads HFWCQEKPAP…EEGKVCSTPM (63 aa). Position 85 is a phosphoserine (Ser85).

This sequence belongs to the PDZK1-interacting protein 1/SMIM24 family. As to quaternary structure, forms a heterodimer (via N-terminal transmembrane helix) with SLC5A2/SGLT2 (via TM13); this interaction enhances SLC5A2 transporter activity. Interacts with PDZK1.

Its subcellular location is the apical cell membrane. Auxiliary protein of electrogenic Na(+)-coupled sugar symporter SLC5A2/SGLT2 and SLC5A1/SGLT1. Essential for the transporter activity of SLC5A2/SGLT2 but not SLC5A1/SGLT1. This chain is PDZK1-interacting protein 1, found in Bos taurus (Bovine).